Consider the following 593-residue polypeptide: Mono(ADP-ribosyl)transferase SpvB (593 aa).

A disordered region spans residues 361 to 384 (PVNNMMPPPPPPPPPMMGGNSSRP). Residues 366 to 376 (MPPPPPPPPPM) show a composition bias toward pro residues. Residues 375–578 (PMMGGNSSRP…LRLSDDATAD (204 aa)) enclose the TR mART core domain. Active-site residues include Arg-473, Ser-503, and Glu-540.

The protein belongs to the SpvB family.

It is found in the secreted. It carries out the reaction L-arginyl-[protein] + NAD(+) = N(omega)-(ADP-D-ribosyl)-L-arginyl-[protein] + nicotinamide + H(+). Mono-ADP-ribosylates muscle and non-muscle actin. ADP-ribosylates Chinese hamster ovary and HeLa cell actin as well as rabbit muscle, porcine heart actin and non-muscle beta- and gamma-actin. ADP-ribosylation of actin prevents the polymerization of G actin to F actin, causing actin filament depolymerization, destruction of the cytoskeleton and cytotoxicity; this requires only the C-terminal 120 residues. Does not possess NAD(+)-glycohydrolase activity, unlike most mART enzymes. This is Mono(ADP-ribosyl)transferase SpvB (spvB) from Salmonella dublin.